Consider the following 356-residue polypeptide: UDP-N-acetylglucosamine--N-acetylmuramyl-(pentapeptide) pyrophosphoryl-undecaprenol N-acetylglucosamine transferase (356 aa).

Residues 12 to 14 (TGG), Asn-124, Arg-163, Ser-188, Ile-242, 261 to 266 (ALTVSE), and Gln-287 each bind UDP-N-acetyl-alpha-D-glucosamine.

This sequence belongs to the glycosyltransferase 28 family. MurG subfamily.

It is found in the cell inner membrane. The catalysed reaction is di-trans,octa-cis-undecaprenyl diphospho-N-acetyl-alpha-D-muramoyl-L-alanyl-D-glutamyl-meso-2,6-diaminopimeloyl-D-alanyl-D-alanine + UDP-N-acetyl-alpha-D-glucosamine = di-trans,octa-cis-undecaprenyl diphospho-[N-acetyl-alpha-D-glucosaminyl-(1-&gt;4)]-N-acetyl-alpha-D-muramoyl-L-alanyl-D-glutamyl-meso-2,6-diaminopimeloyl-D-alanyl-D-alanine + UDP + H(+). Its pathway is cell wall biogenesis; peptidoglycan biosynthesis. Its function is as follows. Cell wall formation. Catalyzes the transfer of a GlcNAc subunit on undecaprenyl-pyrophosphoryl-MurNAc-pentapeptide (lipid intermediate I) to form undecaprenyl-pyrophosphoryl-MurNAc-(pentapeptide)GlcNAc (lipid intermediate II). In Ectopseudomonas mendocina (strain ymp) (Pseudomonas mendocina), this protein is UDP-N-acetylglucosamine--N-acetylmuramyl-(pentapeptide) pyrophosphoryl-undecaprenol N-acetylglucosamine transferase.